The primary structure comprises 238 residues: MSSRSYKRVLLKLSGEALMGEDAFGINRSTIVRMTDEIAEVAALGVELAIVIGGGNIFRGVAPGAQGMDRATADYMGMMATIMNALALQDALKHKGVDTRVQSALNIDQVVEPYIRPKALRYLEEGKVVIFAAGTGNPFFTTDTAAALRGAEIGAEIVLKATKVDGIYSADPNKDPTATRYARISFDEAIVRRLEVMDATAFALCRDQKLPIKVFSINKSGALKRAVSGEDEGTLVHV.

12-15 (KLSG) contacts ATP. Position 54 (glycine 54) interacts with UMP. 2 residues coordinate ATP: glycine 55 and arginine 59. Residues aspartate 74 and 135–142 (TGNPFFTT) contribute to the UMP site. ATP-binding residues include threonine 162, tyrosine 168, and aspartate 171.

The protein belongs to the UMP kinase family. As to quaternary structure, homohexamer.

Its subcellular location is the cytoplasm. The enzyme catalyses UMP + ATP = UDP + ADP. The protein operates within pyrimidine metabolism; CTP biosynthesis via de novo pathway; UDP from UMP (UMPK route): step 1/1. Inhibited by UTP. Catalyzes the reversible phosphorylation of UMP to UDP. In Bordetella bronchiseptica (strain ATCC BAA-588 / NCTC 13252 / RB50) (Alcaligenes bronchisepticus), this protein is Uridylate kinase.